Reading from the N-terminus, the 362-residue chain is uncharacterized protein (362 aa).

Disordered stretches follow at residues 1–117 (MASK…GLNR), 153–172 (SSAPGTSASTSGSPSVGIRK), and 210–266 (RHFD…SSSN). Residues 12-23 (AKKEKEIKKEIE) are compositionally biased toward basic and acidic residues. Positions 51–70 (ENDDTDGDGKEEDAQKEDDI) are enriched in acidic residues. 3 stretches are compositionally biased toward low complexity: residues 100-112 (NSPPSESSSTRNT), 153-167 (SSAPGTSASTSGSPS), and 241-265 (VPPSAVSPAPGSGSSASSGTSTSSS).

This is an uncharacterized protein from Caenorhabditis elegans.